A 160-amino-acid chain; its full sequence is MSMTRQEIQDLCVKSLEEKMVGTTDKGIANGNGFYQYFFTNFPDLRVYFKGAEKFTAEDVKKSERFDKQGQRILLACHLIANVFTNEEVFKAYVRETINRHRIYKMDPALWMAFFTVFTGYLESTGSLNDQQKAAWMALGKEFNAECQVHLKNSNLPYVH.

The 151-residue stretch at 2–152 (SMTRQEIQDL…FNAECQVHLK (151 aa)) folds into the Globin domain. Residue H101 coordinates heme.

The protein belongs to the globin family.

It is found in the cytoplasm. Its function is as follows. May be a globin and may play a role in oxygen transport. The polypeptide is Globin-like protein (glb-1) (Caenorhabditis briggsae).